We begin with the raw amino-acid sequence, 396 residues long: MSGPQQISILGATGSIGLSTLDVVARHPALYQVFALTGFSRLDELLALCIRHTPQYAVVPDQVVARKLQDDLAAAGLDTRVLVGEGGLCEVAADPRVDAVMAAIVGAAGLRPTLAAVEAGKKVLLANKEALVMSGALFMQAVRQNGAVLLPIDSEHNAIFQCLPGDFARGLGAVGVRRIMLTASGGPFRETPLEQLHNVTPEQACAHPVWSMGRKISVDSATMMNKGLELIEACWLFDARPDQVEVVIHPQSVIHSLVDYVDGSVLAQLGNPDMRTPIANALAWPARVDSGVAPLDLFRIGQLDFQAPDEERFPCLRLARQAAEAGGSAPAMLNAANEVAVAAFLDGRIRYLEIAGIIEEVLDHEPVTAVEGLEAVFAADAKARLLAGQWFERHGR.

NADPH-binding residues include Thr13, Gly14, Ser15, Ile16, and Asn127. Lys128 is a binding site for 1-deoxy-D-xylulose 5-phosphate. Glu129 lines the NADPH pocket. Mn(2+) is bound at residue Asp153. 4 residues coordinate 1-deoxy-D-xylulose 5-phosphate: Ser154, Glu155, Ser184, and His207. Glu155 is a binding site for Mn(2+). An NADPH-binding site is contributed by Gly213. 4 residues coordinate 1-deoxy-D-xylulose 5-phosphate: Ser220, Asn225, Lys226, and Glu229. Mn(2+) is bound at residue Glu229.

The protein belongs to the DXR family. It depends on Mg(2+) as a cofactor. Mn(2+) serves as cofactor.

The catalysed reaction is 2-C-methyl-D-erythritol 4-phosphate + NADP(+) = 1-deoxy-D-xylulose 5-phosphate + NADPH + H(+). Its pathway is isoprenoid biosynthesis; isopentenyl diphosphate biosynthesis via DXP pathway; isopentenyl diphosphate from 1-deoxy-D-xylulose 5-phosphate: step 1/6. Its function is as follows. Catalyzes the NADPH-dependent rearrangement and reduction of 1-deoxy-D-xylulose-5-phosphate (DXP) to 2-C-methyl-D-erythritol 4-phosphate (MEP). The chain is 1-deoxy-D-xylulose 5-phosphate reductoisomerase from Pseudomonas syringae pv. syringae (strain B728a).